A 1275-amino-acid chain; its full sequence is Probable Rho-type GTPase-activating protein 2 (1275 aa).

Disordered stretches follow at residues 118–146 (KYES…SPYE), 213–238 (NTKR…LKDS), 280–306 (SSFR…KDNN), and 335–365 (SSPR…SKSG). The segment covering 122–143 (TDSFPSSQPSRANSPQSDSYSS) has biased composition (polar residues). 2 stretches are compositionally biased toward polar residues: residues 290 to 299 (TPFNSDSNIS) and 353 to 364 (PKHSTNNLSSKS). Position 388 is a phosphoserine (S388). Disordered stretches follow at residues 390–466 (IIEN…RSSF) and 539–561 (FSKS…SNSK). 2 stretches are compositionally biased toward polar residues: residues 450–466 (SLSL…RSSF) and 552–561 (QVEKSTSNSK). One can recognise a PH domain in the interval 719–836 (HAQKEGVLLK…WLRAILRQVP (118 aa)). Residues 957–971 (ADTRRNQDAPEKHVP) show a composition bias toward basic and acidic residues. 2 disordered regions span residues 957–988 (ADTR…TDQS) and 1254–1275 (NGAQ…NEFF). The region spanning 1065–1275 (LPLNEAVNIS…DDNGEDNEFF (211 aa)) is the Rho-GAP domain. The span at 1260–1275 (SDSDVSDDNGEDNEFF) shows a compositional bias: acidic residues.

The protein resides in the nucleus. Functionally, GTPase-activating protein for Rho-type proteins. The polypeptide is Probable Rho-type GTPase-activating protein 2 (rga2) (Schizosaccharomyces pombe (strain 972 / ATCC 24843) (Fission yeast)).